The primary structure comprises 230 residues: Lipoprotein-releasing system ATP-binding protein LolD (230 aa).

Residues L6 to Q230 form the ABC transporter domain. G42–S49 lines the ATP pocket.

Belongs to the ABC transporter superfamily. Lipoprotein translocase (TC 3.A.1.125) family. As to quaternary structure, the complex is composed of two ATP-binding proteins (LolD) and two transmembrane proteins (LolC and LolE).

It localises to the cell inner membrane. In terms of biological role, part of the ABC transporter complex LolCDE involved in the translocation of mature outer membrane-directed lipoproteins, from the inner membrane to the periplasmic chaperone, LolA. Responsible for the formation of the LolA-lipoprotein complex in an ATP-dependent manner. The protein is Lipoprotein-releasing system ATP-binding protein LolD of Shewanella oneidensis (strain ATCC 700550 / JCM 31522 / CIP 106686 / LMG 19005 / NCIMB 14063 / MR-1).